A 137-amino-acid chain; its full sequence is Large ribosomal subunit protein uL16c (137 aa).

This sequence belongs to the universal ribosomal protein uL16 family. Part of the 50S ribosomal subunit.

It localises to the plastid. It is found in the chloroplast. The sequence is that of Large ribosomal subunit protein uL16c from Trieres chinensis (Marine centric diatom).